A 109-amino-acid chain; its full sequence is Phosphoribosyl-ATP pyrophosphatase (109 aa).

It belongs to the PRA-PH family.

It is found in the cytoplasm. The enzyme catalyses 1-(5-phospho-beta-D-ribosyl)-ATP + H2O = 1-(5-phospho-beta-D-ribosyl)-5'-AMP + diphosphate + H(+). Its pathway is amino-acid biosynthesis; L-histidine biosynthesis; L-histidine from 5-phospho-alpha-D-ribose 1-diphosphate: step 2/9. The polypeptide is Phosphoribosyl-ATP pyrophosphatase (Paramagnetospirillum magneticum (strain ATCC 700264 / AMB-1) (Magnetospirillum magneticum)).